The sequence spans 51 residues: ATP synthase F(1) complex subunit epsilon, mitochondrial (51 aa).

Residues Lys-21, Lys-32, and Lys-37 each carry the N6-acetyllysine; alternate modification. An N6-succinyllysine; alternate mark is found at Lys-21, Lys-32, and Lys-37. Lys-44 bears the N6-acetyllysine mark.

This sequence belongs to the eukaryotic ATPase epsilon family. As to quaternary structure, component of the ATP synthase complex composed at least of ATP5F1A/subunit alpha, ATP5F1B/subunit beta, ATP5MC1/subunit c (homooctomer), MT-ATP6/subunit a, MT-ATP8/subunit 8, ATP5ME/subunit e, ATP5MF/subunit f, ATP5MG/subunit g, ATP5MK/subunit k, ATP5MJ/subunit j, ATP5F1C/subunit gamma, ATP5F1D/subunit delta, ATP5F1E/subunit epsilon, ATP5PF/subunit F6, ATP5PB/subunit b, ATP5PD/subunit d, ATP5PO/subunit OSCP. ATP synthase complex consists of a soluble F(1) head domain (subunits alpha(3) and beta(3)) - the catalytic core - and a membrane F(0) domain - the membrane proton channel (subunits c, a, 8, e, f, g, k and j). These two domains are linked by a central stalk (subunits gamma, delta, and epsilon) rotating inside the F1 region and a stationary peripheral stalk (subunits F6, b, d, and OSCP).

Its subcellular location is the mitochondrion. It localises to the mitochondrion inner membrane. Subunit epsilon, of the mitochondrial membrane ATP synthase complex (F(1)F(0) ATP synthase or Complex V) that produces ATP from ADP in the presence of a proton gradient across the membrane which is generated by electron transport complexes of the respiratory chain. ATP synthase complex consist of a soluble F(1) head domain - the catalytic core - and a membrane F(1) domain - the membrane proton channel. These two domains are linked by a central stalk rotating inside the F(1) region and a stationary peripheral stalk. During catalysis, ATP synthesis in the catalytic domain of F(1) is coupled via a rotary mechanism of the central stalk subunits to proton translocation. In vivo, can only synthesize ATP although its ATP hydrolase activity can be activated artificially in vitro. May be essential for the assembly of F(1) and may play an important role in the incorporation of the hydrophobic subunit c into the F(1)-c oligomer rotor of the mitochondrial ATP synthase complex. In Rattus norvegicus (Rat), this protein is ATP synthase F(1) complex subunit epsilon, mitochondrial.